A 634-amino-acid chain; its full sequence is MAHYNFKKITVVPSAKDFIDLTLSKTQRKTPTVIHKHYQIHRIRHFYMRKVKFTQQNYHDRLSQILSDFPKLDDIHPFYADLMNILYDKDHYKLALGQINIAKNLVDNVAKDYVRLMKYGDSLYRCKQLKRAALGRMCTIIKRQRQSLEYLEQVRQHLSRLPTIDPNTRTLLLCGYPNVGKSSFINKVTRADVDVQPYAFTTKSLFVGHMDYKYLRWQVVDTPGILDHPLEDRNTIEMQAITALAHLRAAVLYVMDLSEQCGHGLKEQLELFQNIRPLFINKPLIVVANKCDVKRIAELSEEDQKIFLDLQAEGFPVIETSTLTEEGVIQVKTEACDRLLAHRVETKMKGNKVNEVLNRLHLAVPNKRDDKERPPFIPEGVIARRKRMEIEEPKKKRERDLELEMGDDYILDLQKYWDLMNSSEKYDKIPEIWEGHNVADYIDPAIMKKLEELEKEEELRTAAGEYDSDSESEDEEMMEIRQLAKQIREKKKLKILQSKEKNKQGPRMPRTAKKVQRADLENEMRSLGVDMDDKNNAHYAVQARRSRSVTRKRKREESVPPSSTARSRSCSRTPRDVSGLRDVKMVKKAKTMMKKAQKKMNRLGKKGEADRHVFDMKPKHLLSGKRKAGKKDRR.

Position 2 is an N-acetylalanine (Ala2). Lys103 carries the N6-acetyllysine; alternate modification. Lys103 is covalently cross-linked (Glycyl lysine isopeptide (Lys-Gly) (interchain with G-Cter in SUMO2); alternate). Ser122 carries the phosphoserine modification. In terms of domain architecture, OBG-type G spans 169 to 340 (RTLLLCGYPN…VKTEACDRLL (172 aa)). GTP contacts are provided by residues 175-182 (GYPNVGKS), 221-225 (DTPGI), and 289-292 (NKCD). Residue Lys332 forms a Glycyl lysine isopeptide (Lys-Gly) (interchain with G-Cter in SUMO2) linkage. Ser468, Ser470, and Ser472 each carry phosphoserine. A disordered region spans residues 494 to 634 (KILQSKEKNK…KRKAGKKDRR (141 aa)). Lys534 is covalently cross-linked (Glycyl lysine isopeptide (Lys-Gly) (interchain with G-Cter in SUMO2)). The segment covering 544 to 554 (RRSRSVTRKRK) has biased composition (basic residues). Ser558 bears the Phosphoserine mark. A compositionally biased stretch (low complexity) spans 560 to 572 (PPSSTARSRSCSR). Residues 573–585 (TPRDVSGLRDVKM) are compositionally biased toward basic and acidic residues. A compositionally biased stretch (basic residues) spans 586 to 604 (VKKAKTMMKKAQKKMNRLG). Residues 605 to 618 (KKGEADRHVFDMKP) show a composition bias toward basic and acidic residues. The span at 619–634 (KHLLSGKRKAGKKDRR) shows a compositional bias: basic residues.

The protein belongs to the TRAFAC class OBG-HflX-like GTPase superfamily. OBG GTPase family. NOG subfamily. As to quaternary structure, associates with pre-60S ribosomal particles. Interacts with MINAS-60 (product of an alternative open reading frame of RBM10). In terms of tissue distribution, ubiquitous.

The protein localises to the nucleus. The protein resides in the nucleolus. In terms of biological role, involved in the biogenesis of the 60S ribosomal subunit. Acts as TP53 repressor, preventing TP53 stabilization and cell cycle arrest. This Mus musculus (Mouse) protein is GTP-binding protein 4 (Gtpbp4).